Here is a 189-residue protein sequence, read N- to C-terminus: Protein GrpE (189 aa).

A disordered region spans residues 1–37; the sequence is MSDSSKEKKKKFADMVSRQKGDDQQSDNHKQTDDLNE. The segment covering 17-33 has biased composition (basic and acidic residues); it reads SRQKGDDQQSDNHKQTD.

It belongs to the GrpE family. In terms of assembly, homodimer.

The protein resides in the cytoplasm. Its function is as follows. Participates actively in the response to hyperosmotic and heat shock by preventing the aggregation of stress-denatured proteins, in association with DnaK and GrpE. It is the nucleotide exchange factor for DnaK and may function as a thermosensor. Unfolded proteins bind initially to DnaJ; upon interaction with the DnaJ-bound protein, DnaK hydrolyzes its bound ATP, resulting in the formation of a stable complex. GrpE releases ADP from DnaK; ATP binding to DnaK triggers the release of the substrate protein, thus completing the reaction cycle. Several rounds of ATP-dependent interactions between DnaJ, DnaK and GrpE are required for fully efficient folding. The chain is Protein GrpE from Wolbachia sp. subsp. Drosophila simulans (strain wRi).